A 292-amino-acid chain; its full sequence is HTH-type transcriptional regulator BlaA (292 aa).

Residues 5 to 62 (LPLNALRAFEASARHLNFTKAALELYVTQGAVSQQVRMLEERLGVILFKRLPRGLEMT) enclose the HTH lysR-type domain. Residues 22–41 (FTKAALELYVTQGAVSQQVR) constitute a DNA-binding region (H-T-H motif).

It belongs to the LysR transcriptional regulatory family.

Functionally, positive regulator of the expression of the gene (blaB) for beta-lactamase. This Proteus vulgaris protein is HTH-type transcriptional regulator BlaA (blaA).